Consider the following 512-residue polypeptide: L-aspartate oxidase (512 aa).

FAD is bound by residues 17 to 20 and 46 to 53; these read SGLA and SSAWAQGG. Arg278 (proton donor/acceptor) is an active-site residue. FAD contacts are provided by residues Glu361 and 377–378; that span reads SL.

Belongs to the FAD-dependent oxidoreductase 2 family. NadB subfamily. It depends on FAD as a cofactor.

It is found in the cytoplasm. It catalyses the reaction L-aspartate + O2 = iminosuccinate + H2O2. It participates in cofactor biosynthesis; NAD(+) biosynthesis; iminoaspartate from L-aspartate (oxidase route): step 1/1. Catalyzes the oxidation of L-aspartate to iminoaspartate, the first step in the de novo biosynthesis of NAD(+). This Xylella fastidiosa (strain Temecula1 / ATCC 700964) protein is L-aspartate oxidase (nadB).